We begin with the raw amino-acid sequence, 272 residues long: Cell division protein FtsQ (272 aa).

The Cytoplasmic portion of the chain corresponds to 1 to 43 (MEYNPPNTRERIVARRQRMRRNSTEPVVPGWRWRLREGLRSGR). A helical membrane pass occupies residues 44–64 (IVSGIVFVISCFALFYVLFSS). Residues 65–272 (RFRVQTVEVV…FYQYRPDGSS (208 aa)) lie on the Extracellular side of the membrane. One can recognise a POTRA domain in the interval 66–133 (FRVQTVEVVG…DRARIVIVER (68 aa)).

It belongs to the FtsQ/DivIB family. FtsQ subfamily.

The protein resides in the cell membrane. Its function is as follows. Essential cell division protein. The chain is Cell division protein FtsQ from Chloroflexus aurantiacus (strain ATCC 29366 / DSM 635 / J-10-fl).